The chain runs to 165 residues: LIM domain transcription factor LMO4 (165 aa).

LIM zinc-binding domains are found at residues 23–83 and 87–147; these read CAGC…LFGN and CSAC…ALIN.

Interacts strongly with LDBS. Interacts with LDB2 and LDB1. Interaction with complexes consisting of at least LDB1 and LHX3 acts to disassemble the complex; may preferentially disassemble LDB1-LHX3 complexes rather than complexes consisting of LDB1, LHX3 and ISL1. Interacts (via the LIM zinc-binding domain 1) with RBBP8. Interacts with both RPPB8 and LDB1 through the same face and cannot bind to both proteins simultaneously. Interacts with BRCA1 (via the BRCT domains); the interaction represses BRCA1 transcriptional activity. Interacts with DEAF1; LMO4 blocks export from nucleus.

In terms of biological role, transcription cofactor. Plays a role in establishing motor neuron identity, in concert with MNX1, acting, at least in part, to disrupt LDB1-LHX3 complexes thereby negatively modulating interneuron genes in motor neurons. This is LIM domain transcription factor LMO4 (LMO4) from Bos taurus (Bovine).